A 182-amino-acid chain; its full sequence is Peptide methionine sulfoxide reductase MsrA (182 aa).

Residue Cys-13 is part of the active site.

Belongs to the MsrA Met sulfoxide reductase family.

The catalysed reaction is L-methionyl-[protein] + [thioredoxin]-disulfide + H2O = L-methionyl-(S)-S-oxide-[protein] + [thioredoxin]-dithiol. It catalyses the reaction [thioredoxin]-disulfide + L-methionine + H2O = L-methionine (S)-S-oxide + [thioredoxin]-dithiol. Its function is as follows. Has an important function as a repair enzyme for proteins that have been inactivated by oxidation. Catalyzes the reversible oxidation-reduction of methionine sulfoxide in proteins to methionine. The protein is Peptide methionine sulfoxide reductase MsrA of Mycobacterium bovis (strain ATCC BAA-935 / AF2122/97).